The primary structure comprises 535 residues: MEPVLNLNNEVVKLRKDVKKVKVLIIRKLTRHIAKLKSKKGTEELILKNQRRAQRLLEEIHSVKELKPDDVTKTALRKEISFEKVCKKPNSTAEERALARLATHPLLKQKITAIKEAIKAFKDARKTAAEGEREREKDEPEQVTKIKETKKPVQAKLNKNTEEIKSAKEHVKEEKCKNLLEDSDKGTEKALELPYVQENLPEQTAENKEQPKAQDVERPAVERPAVERPAVERPAVERPAVERPAVERPAVERPAVERPAVERPAVERPAVERPAVERPAVERPAVERPAVERPAVERPAVERPAVERPAVERPAVERPAVERPVVESPAVERPPVESPPKKKACLEQELGCELSDIEDSDKEKEYFDDSTEERFYKHSSSFEDSDSGSDNDFFIGKIRRTKKKKSDKDGSKQKEEKVPPTKEKAQTSEVQKEIPTAKSMKLKSVFCKSLSQTKPKPSFTKRETNFRQERNKRPVMPQASPLAKKPLQSKATSVRQPGRKLEAQPLHPSWEASRKRKEQQAQITKFQGKKIVFDD.

2 coiled-coil regions span residues 5-27 (LNLN…LIIR) and 107-177 (LKQK…EKCK). 6 stretches are compositionally biased toward basic and acidic residues: residues 128 to 151 (AAEG…ETKK), 159 to 191 (KNTE…EKAL), 205 to 325 (AENK…ERPV), 361 to 376 (DKEK…ERFY), 406 to 432 (SDKD…EVQK), and 460 to 472 (TKRE…ERNK). Disordered regions lie at residues 128–435 (AAEG…KEIP) and 453–535 (TKPK…VFDD).

It localises to the cytoplasm. The protein resides in the perinuclear region. Functionally, may be involved in regulating transcriptional activation of cardiac genes during the aging process. May play a role in biosynthesis and/or processing of SLC2A4 in adipose cells. The polypeptide is Serum response factor-binding protein 1 (Xenopus tropicalis (Western clawed frog)).